Here is a 581-residue protein sequence, read N- to C-terminus: Phosphatidylinositol N-acetylglucosaminyltransferase subunit Q (581 aa).

The next 5 membrane-spanning stretches (helical) occupy residues 276-298, 344-366, 381-403, 446-468, and 478-500; these read ANMLVSVLLDVALGLLLLSWLHS, LGRFFLYHIHLWISYIHLMSPFI, LTVALSIFSDIIALLTFHIYCFY, LFIGTLLFTILVFLLPTTALYYL, and ITVQGLIHLLVDLINSLPLYSLG.

The protein belongs to the PIGQ family. Component of the glycosylphosphatidylinositol-N-acetylglucosaminyltransferase (GPI-GnT) complex composed at least by PIGA, PIGC, PIGH, PIGP, PIGQ, PIGY and DPM2. Interacts with PIGA, PIGH and PIGC.

It is found in the membrane. The protein operates within glycolipid biosynthesis; glycosylphosphatidylinositol-anchor biosynthesis. Its function is as follows. Part of the glycosylphosphatidylinositol-N-acetylglucosaminyltransferase (GPI-GnT) complex that catalyzes the transfer of N-acetylglucosamine from UDP-N-acetylglucosamine to phosphatidylinositol and participates in the first step of GPI biosynthesis. The chain is Phosphatidylinositol N-acetylglucosaminyltransferase subunit Q from Mus musculus (Mouse).